Consider the following 62-residue polypeptide: Large ribosomal subunit protein uL29 (62 aa).

The protein belongs to the universal ribosomal protein uL29 family.

The protein is Large ribosomal subunit protein uL29 of Syntrophotalea carbinolica (strain DSM 2380 / NBRC 103641 / GraBd1) (Pelobacter carbinolicus).